We begin with the raw amino-acid sequence, 812 residues long: G patch domain-containing protein 1 homolog (812 aa).

The interval 1–42 (MNRKKLAAYGQEFEDDDEEGSSVSKKPTQIHEEIATDEKGKR) is disordered. Positions 29 to 40 (QIHEEIATDEKG) are enriched in basic and acidic residues. Residues 145-191 (SNSIGVRMLRSMGWREGRGIGLANVKQKQKRGGESSEAQFDREQASK) form the G-patch domain. Disordered regions lie at residues 384 to 416 (ANEVEKRDNERGGGEAEEDRDRRQRNRIEFPDE) and 584 to 812 (NEIE…EEKK). Basic and acidic residues predominate over residues 586–609 (IEMRERLLKSRAQRGAEEKKRNQS). Acidic residues-rich tracts occupy residues 610–630 (DDDDEKEYDDKDSDEEEENEA) and 653–668 (DGADSDESNSEDEEAE). Basic and acidic residues predominate over residues 669-720 (EKERQEILKKREEDLKRRREIVEKKEEENRKRVEKELKELENRDLLRVSKQQ). Residues 761-794 (MKKKKKDKKEKEKKKKSKKSKKSKKEKKTKRKHS) show a composition bias toward basic residues. Positions 800-812 (DSGDNSDGWEEKK) are enriched in acidic residues.

It belongs to the GPATCH1 family.

The chain is G patch domain-containing protein 1 homolog from Caenorhabditis elegans.